The sequence spans 255 residues: Thrombin-like enzyme batroxobin (255 aa).

Positions methionine 1 to alanine 18 are cleaved as a signal peptide. Residues glutamine 19 to leucine 24 constitute a propeptide that is removed on maturation. The 223-residue stretch at valine 25–alanine 247 folds into the Peptidase S1 domain. Intrachain disulfides connect cysteine 31-cysteine 163, cysteine 50-cysteine 66, cysteine 98-cysteine 254, cysteine 142-cysteine 208, cysteine 174-cysteine 187, and cysteine 198-cysteine 223. Catalysis depends on charge relay system residues histidine 65 and aspartate 110. Residue asparagine 170 is glycosylated (N-linked (GlcNAc...) asparagine). Catalysis depends on serine 202, which acts as the Charge relay system. Asparagine 249 carries N-linked (GlcNAc...) asparagine glycosylation.

It belongs to the peptidase S1 family. Snake venom subfamily. In terms of assembly, monomer. Expressed by the venom gland.

The protein localises to the secreted. The catalysed reaction is Selective cleavage of Arg-|-Xaa bond in fibrinogen, to form fibrin, and release fibrinopeptide A. The specificity of further degradation of fibrinogen varies with species origin of the enzyme.. Functionally, thrombin-like snake venom serine protease. Cleaves Arg-Gly bonds in fibrinogen alpha chains (FGA). The sequence is that of Thrombin-like enzyme batroxobin from Bothrops atrox (Barba amarilla).